A 342-amino-acid polypeptide reads, in one-letter code: Holliday junction branch migration complex subunit RuvB (342 aa).

The large ATPase domain (RuvB-L) stretch occupies residues 4 to 182; sequence TDRLLSAGRR…FGIPIRLQFY (179 aa). Residues leucine 21, arginine 22, glycine 63, lysine 66, threonine 67, threonine 68, arginine 172, tyrosine 182, and arginine 219 each contribute to the ATP site. Threonine 67 serves as a coordination point for Mg(2+). The tract at residues 183 to 253 is small ATPAse domain (RuvB-S); sequence TVEELERVVS…VADQSLNRLE (71 aa). Residues 256–342 are head domain (RuvB-H); that stretch reads NLGLDAMDRR…EAGQDGLFDV (87 aa). DNA contacts are provided by arginine 292, arginine 311, and arginine 316.

The protein belongs to the RuvB family. Homohexamer. Forms an RuvA(8)-RuvB(12)-Holliday junction (HJ) complex. HJ DNA is sandwiched between 2 RuvA tetramers; dsDNA enters through RuvA and exits via RuvB. An RuvB hexamer assembles on each DNA strand where it exits the tetramer. Each RuvB hexamer is contacted by two RuvA subunits (via domain III) on 2 adjacent RuvB subunits; this complex drives branch migration. In the full resolvosome a probable DNA-RuvA(4)-RuvB(12)-RuvC(2) complex forms which resolves the HJ.

It localises to the cytoplasm. It carries out the reaction ATP + H2O = ADP + phosphate + H(+). Functionally, the RuvA-RuvB-RuvC complex processes Holliday junction (HJ) DNA during genetic recombination and DNA repair, while the RuvA-RuvB complex plays an important role in the rescue of blocked DNA replication forks via replication fork reversal (RFR). RuvA specifically binds to HJ cruciform DNA, conferring on it an open structure. The RuvB hexamer acts as an ATP-dependent pump, pulling dsDNA into and through the RuvAB complex. RuvB forms 2 homohexamers on either side of HJ DNA bound by 1 or 2 RuvA tetramers; 4 subunits per hexamer contact DNA at a time. Coordinated motions by a converter formed by DNA-disengaged RuvB subunits stimulates ATP hydrolysis and nucleotide exchange. Immobilization of the converter enables RuvB to convert the ATP-contained energy into a lever motion, pulling 2 nucleotides of DNA out of the RuvA tetramer per ATP hydrolyzed, thus driving DNA branch migration. The RuvB motors rotate together with the DNA substrate, which together with the progressing nucleotide cycle form the mechanistic basis for DNA recombination by continuous HJ branch migration. Branch migration allows RuvC to scan DNA until it finds its consensus sequence, where it cleaves and resolves cruciform DNA. This Rhizorhabdus wittichii (strain DSM 6014 / CCUG 31198 / JCM 15750 / NBRC 105917 / EY 4224 / RW1) (Sphingomonas wittichii) protein is Holliday junction branch migration complex subunit RuvB.